The primary structure comprises 791 residues: Nuclear cap-binding protein subunit 1-A (791 aa).

Positions 1 to 24 (MSRRRHSDENDGGQAHKRRKTSEP) are disordered. Residues 28 to 240 (EDRLESLICR…CLWAQIQKLK (213 aa)) form the MIF4G domain. A coiled-coil region spans residues 641-714 (LHSTIRKMNK…SEQKNLFLVI (74 aa)). The interval 664 to 687 (QRLAKQHKHRDSDDNDEDSGRKDG) is disordered.

Belongs to the NCBP1 family. As to quaternary structure, component of the nuclear cap-binding complex (CBC), a heterodimer composed of ncbp1/cbp80 and ncbp2/cbp20 that interacts with m7GpppG-capped RNA. Component of an alternative nuclear cap-binding complex (CBC) composed of ncbp1/cbp80 and ncbp3.

The protein localises to the nucleus. It localises to the cytoplasm. Functionally, component of the cap-binding complex (CBC), which binds cotranscriptionally to the 5'-cap of pre-mRNAs and is involved in various processes such as pre-mRNA splicing, translation regulation, nonsense-mediated mRNA decay, RNA-mediated gene silencing (RNAi) by microRNAs (miRNAs) and mRNA export. The CBC complex is involved in mRNA export from the nucleus, leading to the recruitment of the mRNA export machinery to the 5'-end of mRNA and to mRNA export in a 5' to 3' direction through the nuclear pore. The CBC complex is also involved in mediating U snRNA and intronless mRNAs export from the nucleus. The CBC complex is essential for a pioneer round of mRNA translation, before steady state translation when the CBC complex is replaced by cytoplasmic cap-binding protein eIF4E. The pioneer round of mRNA translation mediated by the CBC complex plays a central role in nonsense-mediated mRNA decay (NMD), NMD only taking place in mRNAs bound to the CBC complex, but not on eIF4E-bound mRNAs. The CBC complex enhances NMD in mRNAs containing at least one exon-junction complex (EJC), promoting the interaction between UPF1 and UPF2. The CBC complex is also involved in 'failsafe' NMD, which is independent of the EJC complex, while it does not participate in Staufen-mediated mRNA decay (SMD). During cell proliferation, the CBC complex is also involved in microRNAs (miRNAs) biogenesis via its interaction with SRRT/ARS2 and is required for miRNA-mediated RNA interference. The CBC complex also acts as a negative regulator of parn, thereby acting as an inhibitor of mRNA deadenylation. In the CBC complex, NCBP1/CBP80 does not bind directly capped RNAs (m7GpppG-capped RNA) but is required to stabilize the movement of the N-terminal loop of NCBP2/CBP20 and lock the CBC into a high affinity cap-binding state with the cap structure. Associates with NCBP3 to form an alternative cap-binding complex (CBC) which plays a key role in mRNA export. The conventional CBC with NCBP2 binds both small nuclear RNA (snRNA) and messenger (mRNA) and is involved in their export from the nucleus whereas the alternative CBC with NCBP3 does not bind snRNA and associates only with mRNA thereby playing a role only in mRNA export. The polypeptide is Nuclear cap-binding protein subunit 1-A (ncbp1-a) (Xenopus laevis (African clawed frog)).